A 739-amino-acid polypeptide reads, in one-letter code: NAD(P)H-quinone oxidoreductase subunit 5, chloroplastic (739 aa).

16 consecutive transmembrane segments (helical) span residues 9–29, 40–60, 89–109, 125–145, 147–167, 185–205, 219–239, 258–278, 286–306, 327–347, 354–374, 396–416, 425–445, 543–563, 602–622, and 717–737; these read WIIP…LILF, WAFQ…YLSI, IDPL…MVLI, FAYM…SNLI, IYIF…FWFT, GDFG…SFEF, NEVN…GAVA, TPIS…FLVA, VIPY…LLGA, LGYM…FHLI, ALLF…VGYS, ITFL…CFWS, WLYS…TAFY, LFPI…GIPF, VVSV…YKPI, and SYLF…YLLF.

This sequence belongs to the complex I subunit 5 family. In terms of assembly, NDH is composed of at least 16 different subunits, 5 of which are encoded in the nucleus.

It localises to the plastid. The protein localises to the chloroplast thylakoid membrane. The enzyme catalyses a plastoquinone + NADH + (n+1) H(+)(in) = a plastoquinol + NAD(+) + n H(+)(out). The catalysed reaction is a plastoquinone + NADPH + (n+1) H(+)(in) = a plastoquinol + NADP(+) + n H(+)(out). In terms of biological role, NDH shuttles electrons from NAD(P)H:plastoquinone, via FMN and iron-sulfur (Fe-S) centers, to quinones in the photosynthetic chain and possibly in a chloroplast respiratory chain. The immediate electron acceptor for the enzyme in this species is believed to be plastoquinone. Couples the redox reaction to proton translocation, and thus conserves the redox energy in a proton gradient. In Solanum tuberosum (Potato), this protein is NAD(P)H-quinone oxidoreductase subunit 5, chloroplastic (ndhF).